Consider the following 447-residue polypeptide: ATP-dependent protease ATPase subunit HslU (447 aa).

ATP is bound by residues Ile-18, 60-65 (GVGKTE), Asp-259, Glu-325, and Arg-397.

The protein belongs to the ClpX chaperone family. HslU subfamily. As to quaternary structure, a double ring-shaped homohexamer of HslV is capped on each side by a ring-shaped HslU homohexamer. The assembly of the HslU/HslV complex is dependent on binding of ATP.

It is found in the cytoplasm. Its function is as follows. ATPase subunit of a proteasome-like degradation complex; this subunit has chaperone activity. The binding of ATP and its subsequent hydrolysis by HslU are essential for unfolding of protein substrates subsequently hydrolyzed by HslV. HslU recognizes the N-terminal part of its protein substrates and unfolds these before they are guided to HslV for hydrolysis. The chain is ATP-dependent protease ATPase subunit HslU from Burkholderia lata (strain ATCC 17760 / DSM 23089 / LMG 22485 / NCIMB 9086 / R18194 / 383).